The chain runs to 147 residues: Large ribosomal subunit protein uL15 (147 aa).

Residues 1–54 (MRLSDIKPTPGSMKKRTRVGRGIGSGKGKTSGKGHKGQKARGRGKVHPWFEGGQ) form a disordered region. Residues 30–46 (TSGKGHKGQKARGRGKV) show a composition bias toward basic residues.

Belongs to the universal ribosomal protein uL15 family. In terms of assembly, part of the 50S ribosomal subunit.

In terms of biological role, binds to the 23S rRNA. In Thermosipho melanesiensis (strain DSM 12029 / CIP 104789 / BI429), this protein is Large ribosomal subunit protein uL15.